The following is a 248-amino-acid chain: 3-deoxy-manno-octulosonate cytidylyltransferase (248 aa).

Belongs to the KdsB family.

Its subcellular location is the cytoplasm. It catalyses the reaction 3-deoxy-alpha-D-manno-oct-2-ulosonate + CTP = CMP-3-deoxy-beta-D-manno-octulosonate + diphosphate. It functions in the pathway nucleotide-sugar biosynthesis; CMP-3-deoxy-D-manno-octulosonate biosynthesis; CMP-3-deoxy-D-manno-octulosonate from 3-deoxy-D-manno-octulosonate and CTP: step 1/1. It participates in bacterial outer membrane biogenesis; lipopolysaccharide biosynthesis. In terms of biological role, activates KDO (a required 8-carbon sugar) for incorporation into bacterial lipopolysaccharide in Gram-negative bacteria. The polypeptide is 3-deoxy-manno-octulosonate cytidylyltransferase (Shigella flexneri).